A 439-amino-acid chain; its full sequence is MTRTGLSDTIAAIATAPGSAGVGIVRISGPDALGIADGAFRGRRRPSATRGGRFLFGQLVAGDGEVLDEGLCLVFRGPHSYTGEDVAELQTHGSPAVLARVLSRVLELGARPARPGEFTLRAYLAGRLDLAQAEAVLELVNAGTETARRQAALGLSGALGERVERIAAHVTRTLAALQAMLDYPEEGVPDEDRTVPLAAAEAELHALVGTARAGQVATRGARLALIGRPNAGKSSLLNALLGYERSIVTPIPGTTRDYLEAQLSLAGVPVTLVDTAGLRETGDEVEAAGVRQAVRLAESADLVLVLEDGSQPRDHLPAELPRETRMLRVRTKADLPAAWTDPGALDVSAVTGQGLSALRDAIHTALIGDAAQGEAWLTTERQADAARRALTHIQAARSLPDDLAGYELEEALRALADLTGRDVQDDVVDAVFRNFCVGK.

Residues Arg26, Glu88, and Arg127 each contribute to the (6S)-5-formyl-5,6,7,8-tetrahydrofolate site. Residues Gly220–Ile367 enclose the TrmE-type G domain. Position 230 (Asn230) interacts with K(+). GTP contacts are provided by residues Asn230 to Ser235, Thr249 to Thr255, and Asp274 to Gly277. Ser234 is a Mg(2+) binding site. The K(+) site is built by Thr249, Ile251, and Thr254. Residue Thr255 coordinates Mg(2+). Residue Lys439 participates in (6S)-5-formyl-5,6,7,8-tetrahydrofolate binding.

It belongs to the TRAFAC class TrmE-Era-EngA-EngB-Septin-like GTPase superfamily. TrmE GTPase family. As to quaternary structure, homodimer. Heterotetramer of two MnmE and two MnmG subunits. K(+) serves as cofactor.

The protein resides in the cytoplasm. Functionally, exhibits a very high intrinsic GTPase hydrolysis rate. Involved in the addition of a carboxymethylaminomethyl (cmnm) group at the wobble position (U34) of certain tRNAs, forming tRNA-cmnm(5)s(2)U34. This Deinococcus geothermalis (strain DSM 11300 / CIP 105573 / AG-3a) protein is tRNA modification GTPase MnmE.